Reading from the N-terminus, the 332-residue chain is Fe(3+) dicitrate transport system permease protein FecC (332 aa).

The Cytoplasmic portion of the chain corresponds to 1–7 (MTAIKHP). The helical transmembrane segment at 8 to 28 (VLLWGLPVAALIIIFWLSLFC) threads the bilayer. The Periplasmic portion of the chain corresponds to 29 to 64 (YSAIPVSGADATRALLPGHTPTLPEALVQNLRLPRS). A helical membrane pass occupies residues 65-85 (LVAVLIGASLALAGTLLQTLT). Residues 86–100 (HNPMASPSLLGINSG) lie on the Cytoplasmic side of the membrane. Residues 101 to 121 (AALAMALTSALSPTPIAGYSL) traverse the membrane as a helical segment. Residue Ser122 is a topological domain, periplasmic. Residues 123 to 143 (FIAACGGGVSWLLVMTAGGGF) form a helical membrane-spanning segment. The Cytoplasmic portion of the chain corresponds to 144-151 (RHTHDRNK). A helical transmembrane segment spans residues 152–172 (LILAGIALSAFCMGLTRITLL). Residues 173 to 199 (LAEDHAYGIFYWLAGGVSHARWQDVWQ) are Periplasmic-facing. A helical transmembrane segment spans residues 200–220 (LLPVVVTAVPVVLLLANQLNL). The Cytoplasmic segment spans residues 221–244 (LNLSDSTAHTLGVNLTRLRLVINM). Residues 245-265 (LVLLLVGACVSVAGPVAFIGL) traverse the membrane as a helical segment. Residues 266–307 (LVPHLARFWAGFDQRNVLPVSMLLGATLMLLADVLARALAFP) lie on the Periplasmic side of the membrane. A helical transmembrane segment spans residues 308–328 (GDLPAGAVLALIGSPCFVWLV). Residues 329-332 (RRRG) lie on the Cytoplasmic side of the membrane.

Belongs to the binding-protein-dependent transport system permease family. FecCD subfamily. In terms of assembly, the complex is composed of two ATP-binding proteins (FecE), two transmembrane proteins (FecC and FecD) and a solute-binding protein (FecB). Interacts with FecB.

Its subcellular location is the cell inner membrane. In terms of biological role, part of the ABC transporter complex FecBCDE involved in citrate-dependent Fe(3+) uptake. Probably responsible for the translocation of the substrate across the membrane. The sequence is that of Fe(3+) dicitrate transport system permease protein FecC from Escherichia coli (strain K12).